The sequence spans 58 residues: MPKHAQVKPHLLYEWDYEKGIIKPKNKRCPRCGSFMAHHLKPVPRWHCGKCGYTIFEK.

4 residues coordinate Zn(2+): C29, C32, C48, and C51. The segment at 29–51 (CPRCGSFMAHHLKPVPRWHCGKC) adopts a C4-type zinc-finger fold.

Belongs to the eukaryotic ribosomal protein eS31 family. In terms of assembly, part of the 30S ribosomal subunit. Zn(2+) serves as cofactor.

This chain is Small ribosomal subunit protein eS31, found in Ignicoccus hospitalis (strain KIN4/I / DSM 18386 / JCM 14125).